Here is a 172-residue protein sequence, read N- to C-terminus: RTX-I toxin-activating lysine-acyltransferase ApxIC (172 aa).

Active-site residues include His-24 and Asp-93.

Belongs to the RTX toxin acyltransferase family. Homodimer.

Its subcellular location is the cytoplasm. The enzyme catalyses a fatty acyl-[ACP] + L-lysyl-[protein] = N(6)-(fatty acyl)-L-lysyl-[protein] + holo-[ACP] + H(+). Its function is as follows. Protein-lysine acyltransferase that catalyzes fatty acylation of the protoxin, thereby converting it to the active toxin. The protein is RTX-I toxin-activating lysine-acyltransferase ApxIC of Actinobacillus pleuropneumoniae (Haemophilus pleuropneumoniae).